A 144-amino-acid polypeptide reads, in one-letter code: Universal stress protein F (144 aa).

Belongs to the universal stress protein A family. As to quaternary structure, homodimer.

This chain is Universal stress protein F (uspF), found in Escherichia coli (strain K12).